The primary structure comprises 171 residues: Co-chaperone protein HscB homolog (171 aa).

The 73-residue stretch at 2 to 74 folds into the J domain; the sequence is NYFELFGLPI…LRRAEYLLSL (73 aa).

It belongs to the HscB family. Interacts with HscA and stimulates its ATPase activity.

In terms of biological role, co-chaperone involved in the maturation of iron-sulfur cluster-containing proteins. Seems to help targeting proteins to be folded toward HscA. The protein is Co-chaperone protein HscB homolog of Vibrio cholerae serotype O1 (strain M66-2).